Consider the following 176-residue polypeptide: NAD(P)H-quinone oxidoreductase subunit J (176 aa).

This sequence belongs to the complex I 30 kDa subunit family. As to quaternary structure, NDH-1 can be composed of about 15 different subunits; different subcomplexes with different compositions have been identified which probably have different functions.

The protein resides in the cellular thylakoid membrane. It catalyses the reaction a plastoquinone + NADH + (n+1) H(+)(in) = a plastoquinol + NAD(+) + n H(+)(out). The enzyme catalyses a plastoquinone + NADPH + (n+1) H(+)(in) = a plastoquinol + NADP(+) + n H(+)(out). NDH-1 shuttles electrons from an unknown electron donor, via FMN and iron-sulfur (Fe-S) centers, to quinones in the respiratory and/or the photosynthetic chain. The immediate electron acceptor for the enzyme in this species is believed to be plastoquinone. Couples the redox reaction to proton translocation, and thus conserves the redox energy in a proton gradient. Cyanobacterial NDH-1 also plays a role in inorganic carbon-concentration. The sequence is that of NAD(P)H-quinone oxidoreductase subunit J from Prochlorococcus marinus subsp. pastoris (strain CCMP1986 / NIES-2087 / MED4).